The following is a 442-amino-acid chain: Glutamyl-tRNA(Gln) amidotransferase subunit D (442 aa).

A disordered region spans residues 63 to 84; sequence TQTDIGSSAGAGADTEADKTES. An Asparaginase/glutaminase domain is found at 102 to 429; the sequence is PTVSLISTGG…PDPTNAMRKS (328 aa). Catalysis depends on residues Thr-112, Thr-188, Asp-189, and Lys-265.

Belongs to the asparaginase 1 family. GatD subfamily. In terms of assembly, heterodimer of GatD and GatE.

It catalyses the reaction L-glutamyl-tRNA(Gln) + L-glutamine + ATP + H2O = L-glutaminyl-tRNA(Gln) + L-glutamate + ADP + phosphate + H(+). Functionally, allows the formation of correctly charged Gln-tRNA(Gln) through the transamidation of misacylated Glu-tRNA(Gln) in organisms which lack glutaminyl-tRNA synthetase. The reaction takes place in the presence of glutamine and ATP through an activated gamma-phospho-Glu-tRNA(Gln). The GatDE system is specific for glutamate and does not act on aspartate. The protein is Glutamyl-tRNA(Gln) amidotransferase subunit D of Haloquadratum walsbyi (strain DSM 16790 / HBSQ001).